The primary structure comprises 577 residues: Arginine--tRNA ligase (577 aa).

The 'HIGH' region motif lies at 132 to 142 (ANPTGPLHVGH).

The protein belongs to the class-I aminoacyl-tRNA synthetase family. As to quaternary structure, monomer.

The protein resides in the cytoplasm. It catalyses the reaction tRNA(Arg) + L-arginine + ATP = L-arginyl-tRNA(Arg) + AMP + diphosphate. In Herminiimonas arsenicoxydans, this protein is Arginine--tRNA ligase.